The chain runs to 229 residues: Cytidylate kinase (229 aa).

12 to 20 is a binding site for ATP; it reads GPSGAGKGT.

It belongs to the cytidylate kinase family. Type 1 subfamily.

It localises to the cytoplasm. It carries out the reaction CMP + ATP = CDP + ADP. It catalyses the reaction dCMP + ATP = dCDP + ADP. The protein is Cytidylate kinase of Pseudomonas aeruginosa (strain UCBPP-PA14).